The chain runs to 235 residues: Leucyl/phenylalanyl-tRNA--protein transferase (235 aa).

It belongs to the L/F-transferase family.

The protein resides in the cytoplasm. The catalysed reaction is N-terminal L-lysyl-[protein] + L-leucyl-tRNA(Leu) = N-terminal L-leucyl-L-lysyl-[protein] + tRNA(Leu) + H(+). It catalyses the reaction N-terminal L-arginyl-[protein] + L-leucyl-tRNA(Leu) = N-terminal L-leucyl-L-arginyl-[protein] + tRNA(Leu) + H(+). The enzyme catalyses L-phenylalanyl-tRNA(Phe) + an N-terminal L-alpha-aminoacyl-[protein] = an N-terminal L-phenylalanyl-L-alpha-aminoacyl-[protein] + tRNA(Phe). Its function is as follows. Functions in the N-end rule pathway of protein degradation where it conjugates Leu, Phe and, less efficiently, Met from aminoacyl-tRNAs to the N-termini of proteins containing an N-terminal arginine or lysine. The polypeptide is Leucyl/phenylalanyl-tRNA--protein transferase (Anaeromyxobacter sp. (strain Fw109-5)).